Reading from the N-terminus, the 557-residue chain is MAFNRRSKNITQGVSRSPNRSMYYAMGYEKADFDKPMVGIANGHSTITPCNSGLQKLADIAIKTIKDAGGNPQVFGTPTISDGMSMGTEGMKYSLISREVIADCIETAVNGQWMDGVLVIGGCDKNMPGGMIAMLRTNVPSIYVYGGTIKPGHWKGKDLTIVSAFEAVGEFTAGRMSQEDFDGIERNACPSSGSCGGMYTANTMSSSFEALGLALPYSSTMANPDDEKVGSAAESARVLIEAIKKDLKPRDIVTRKAIENAVAVIMATGGSTNAVLHFLAIAHAAEIDWTIDDFERMRKKVPVICDLKPSGKYVATDLHKAGGIPQVMKVLLDAGLLHGDCMTITGQTVAEALAHIPSVPSADQDVIHTIDKALYAQGHLAILKGNLSPEGCVAKITGLKNPVITGPARVFDDEYSAMDAIMANQIKAGDVLVMRYLGPKGGPGMPEMLAPTSALVGQGLGESVGLITDGRFSGGTWGMVVGHVSPEAFVGGTIGLVEEGDSVTIDARQLLIQLNVSEEEIARRRANWKQPAPRYTRGVLAKYAALASTASKGAVTG.

Cysteine 50 is a binding site for [2Fe-2S] cluster. Aspartate 82 provides a ligand contact to Mg(2+). Cysteine 123 provides a ligand contact to [2Fe-2S] cluster. Mg(2+)-binding residues include aspartate 124 and lysine 125. Residue lysine 125 is modified to N6-carboxylysine. Residue cysteine 195 coordinates [2Fe-2S] cluster. Glutamate 447 is a binding site for Mg(2+). The Proton acceptor role is filled by serine 473.

The protein belongs to the IlvD/Edd family. As to quaternary structure, homodimer. It depends on [2Fe-2S] cluster as a cofactor. Mg(2+) serves as cofactor.

It carries out the reaction (2R)-2,3-dihydroxy-3-methylbutanoate = 3-methyl-2-oxobutanoate + H2O. The catalysed reaction is (2R,3R)-2,3-dihydroxy-3-methylpentanoate = (S)-3-methyl-2-oxopentanoate + H2O. It participates in amino-acid biosynthesis; L-isoleucine biosynthesis; L-isoleucine from 2-oxobutanoate: step 3/4. The protein operates within amino-acid biosynthesis; L-valine biosynthesis; L-valine from pyruvate: step 3/4. In terms of biological role, functions in the biosynthesis of branched-chain amino acids. Catalyzes the dehydration of (2R,3R)-2,3-dihydroxy-3-methylpentanoate (2,3-dihydroxy-3-methylvalerate) into 2-oxo-3-methylpentanoate (2-oxo-3-methylvalerate) and of (2R)-2,3-dihydroxy-3-methylbutanoate (2,3-dihydroxyisovalerate) into 2-oxo-3-methylbutanoate (2-oxoisovalerate), the penultimate precursor to L-isoleucine and L-valine, respectively. The sequence is that of Dihydroxy-acid dehydratase from Herminiimonas arsenicoxydans.